Consider the following 102-residue polypeptide: ATP-dependent Clp protease adapter protein ClpS (102 aa).

It belongs to the ClpS family. In terms of assembly, binds to the N-terminal domain of the chaperone ClpA.

Involved in the modulation of the specificity of the ClpAP-mediated ATP-dependent protein degradation. This Shewanella piezotolerans (strain WP3 / JCM 13877) protein is ATP-dependent Clp protease adapter protein ClpS.